Consider the following 614-residue polypeptide: 1-deoxy-D-xylulose-5-phosphate synthase (614 aa).

Residues His-74 and 115-117 (AHS) contribute to the thiamine diphosphate site. Residue Asp-146 coordinates Mg(2+). Residues 147–148 (GA), Asn-175, Tyr-282, and Glu-363 each bind thiamine diphosphate. Asn-175 lines the Mg(2+) pocket.

The protein belongs to the transketolase family. DXPS subfamily. As to quaternary structure, homodimer. Requires Mg(2+) as cofactor. It depends on thiamine diphosphate as a cofactor.

The enzyme catalyses D-glyceraldehyde 3-phosphate + pyruvate + H(+) = 1-deoxy-D-xylulose 5-phosphate + CO2. Its pathway is metabolic intermediate biosynthesis; 1-deoxy-D-xylulose 5-phosphate biosynthesis; 1-deoxy-D-xylulose 5-phosphate from D-glyceraldehyde 3-phosphate and pyruvate: step 1/1. In terms of biological role, catalyzes the acyloin condensation reaction between C atoms 2 and 3 of pyruvate and glyceraldehyde 3-phosphate to yield 1-deoxy-D-xylulose-5-phosphate (DXP). The sequence is that of 1-deoxy-D-xylulose-5-phosphate synthase from Nitrosomonas eutropha (strain DSM 101675 / C91 / Nm57).